Here is a 207-residue protein sequence, read N- to C-terminus: Probable isochorismatase (207 aa).

Belongs to the isochorismatase family.

The enzyme catalyses isochorismate + H2O = (2S,3S)-2,3-dihydroxy-2,3-dihydrobenzoate + pyruvate. The protein operates within antibiotic biosynthesis; phenazine biosynthesis. Involved in the biosynthesis of the antibiotic phenazine, a nitrogen-containing heterocyclic molecule having important roles in virulence, competition and biological control. This isochorismatase may remove pyruvate from chorismate during the formation of the phenazine ring structure and/or stabilize the phenazine biosynthetic complex. This is Probable isochorismatase (phzA) from Pseudomonas chlororaphis (Pseudomonas aureofaciens).